Here is a 341-residue protein sequence, read N- to C-terminus: GDP-fucose transporter 1 (341 aa).

10 helical membrane passes run 17–37, 41–61, 71–91, 103–123, 132–152, 156–176, 187–207, 231–251, 260–280, and 283–303; these read LVIGYALCSSLLAVINKLAIT, YPGLLTALQYLTCTVAVYLLG, FTWDTAKKFLPAAIVFYLAIF, DTFIVFRSLTPLLVAIADTVF, LTFLSLVVILAGAVGYVATDS, LTAYSWALAYLVTITTEMVYI, IWGLVLYNNLLSLMIAPVFWF, AFSSVAASCVFGFLISYFGFA, AFTVTGVVNKFLTVVINVLIW, and HATPVGLVCLLFTICGGVGYQ. The segment at 316 to 341 is disordered; sequence SEKDSEKGEEDEELTQLVPGKLASVV.

It belongs to the nucleotide-sugar transporter family. GDP-Mannose:GMP antiporter (GMA) (TC 2.A.7.13) subfamily. As to expression, ubiquitous.

It is found in the golgi apparatus membrane. Its function is as follows. Acts as the major nucleotide-sugar transporter for the import of GDP-Fucose into the Golgi lumen. Transports GDP-Fucose in a strict counter-exchange mode. Is required for proper plant growth and development. Also acts as a GDP-mannose transporter that may be involved in the import of GDP-mannose from the cytoplasm into the Golgi lumen. The sequence is that of GDP-fucose transporter 1 from Arabidopsis thaliana (Mouse-ear cress).